The primary structure comprises 306 residues: Polyadenylate-binding protein 2 (306 aa).

The span at 1–12 (MAAAAAAAAAAG) shows a compositional bias: low complexity. The tract at residues 1–115 (MAAAAAAAAA…EGDPGDGAIE (115 aa)) is disordered. A2 is subject to N-acetylalanine. Residues 2 to 145 (AAAAAAAAAA…LKELQNEVEK (144 aa)) form an interaction with SKIP region. An Omega-N-methylarginine modification is found at R17. At S19 the chain carries Phosphoserine. Residues 30 to 47 (GAGGEAGEGAPGGAGDYG) show a composition bias toward gly residues. Residues 51–72 (ESEELEPEELLLEPEPEPEPEE) show a composition bias toward acidic residues. S52 carries the phosphoserine modification. The span at 77–87 (PRAPPGAPGPG) shows a compositional bias: pro residues. Positions 115 to 151 (EDPELEAIKARVREMEEEAEKLKELQNEVEKQMNMSP) form a coiled coil. Residues 119-147 (LEAIKARVREMEEEAEKLKELQNEVEKQM) form a stimulates PAPOLA region. Residues S150 and S235 each carry the phosphoserine modification. The necessary for homooligomerization stretch occupies residues 155 to 306 (NAGPVIMSIE…ARATSWYSPY (152 aa)). One can recognise an RRM domain in the interval 172–249 (RSIYVGNVDY…RQIKVIPKRT (78 aa)). 3 positions are modified to asymmetric dimethylarginine; alternate: R238, R259, and R263. An omega-N-methylarginine; alternate mark is found at R238, R259, and R263. Asymmetric dimethylarginine occurs at positions 265, 267, 269, 277, 279, 287, 289, 291, 294, 296, and 298. The interaction with PAPOLA stretch occupies residues 286-306 (SRPRGRVYRGRARATSWYSPY).

As to quaternary structure, monomer and homooligomer. Binds RNA as a monomer and oligomerizes when bound to poly(A). Associates in a ternary complex with CPSF4 and NS/NS1 and interaction with NS/NS1, blocks nuclear export of host cell mRNAs. Associates in a single complex with SKIP and MYOD1 and interacts with SKIP in differentiated myocytes. Interacts with NUDT21/CPSF5. Identified in a IGF2BP1-dependent mRNP granule complex containing untranslated mRNAs. Interacts with PAPOLA, but only in presence of oligo(A) RNA. Interacts with transportin. May interact with SETX. Interacts (via RRM domain and C-terminal arginine-rich region) with ZFP36 (via hypophosphorylated form); this interaction occurs in the nucleus in a RNA-independent manner, decreases in presence of single-stranded poly(A) RNA-oligomer and in a p38-dependent-manner and may down-regulated RNA poly(A) polymerase activity. Component of the poly(A) tail exosome targeting (PAXT) complex composed of PABPN1, ZFC3H1 and MTREX. Interacts with ZFC3H1 in a RNase-insensitive manner. Interacts with FRG1. Interacts with ZC3H11A. Post-translationally, arginine dimethylation is asymmetric and involves PRMT1 and PRMT3. It does not influence the RNA binding properties. Ubiquitous.

It is found in the nucleus. The protein resides in the cytoplasm. The protein localises to the nucleus speckle. Functionally, involved in the 3'-end formation of mRNA precursors (pre-mRNA) by the addition of a poly(A) tail of 200-250 nt to the upstream cleavage product. Stimulates poly(A) polymerase (PAPOLA) conferring processivity on the poly(A) tail elongation reaction and also controls the poly(A) tail length. Increases the affinity of poly(A) polymerase for RNA. Is also present at various stages of mRNA metabolism including nucleocytoplasmic trafficking and nonsense-mediated decay (NMD) of mRNA. Cooperates with SKIP to synergistically activate E-box-mediated transcription through MYOD1 and may regulate the expression of muscle-specific genes. Binds to poly(A) and to poly(G) with high affinity. May protect the poly(A) tail from degradation. Subunit of the trimeric poly(A) tail exosome targeting (PAXT) complex, a complex that directs a subset of long and polyadenylated poly(A) RNAs for exosomal degradation. The RNA exosome is fundamental for the degradation of RNA in eukaryotic nuclei. Substrate targeting is facilitated by its cofactor MTREX, which links to RNA-binding protein adapters. In Bos taurus (Bovine), this protein is Polyadenylate-binding protein 2 (PABPN1).